The following is a 545-amino-acid chain: Chaperonin GroEL (545 aa).

ATP-binding positions include 30 to 33 (TLGP), Lys51, 87 to 91 (DGTTT), Gly415, and Asp495.

It belongs to the chaperonin (HSP60) family. In terms of assembly, forms a cylinder of 14 subunits composed of two heptameric rings stacked back-to-back. Interacts with the co-chaperonin GroES.

The protein resides in the cytoplasm. It carries out the reaction ATP + H2O + a folded polypeptide = ADP + phosphate + an unfolded polypeptide.. In terms of biological role, together with its co-chaperonin GroES, plays an essential role in assisting protein folding. The GroEL-GroES system forms a nano-cage that allows encapsulation of the non-native substrate proteins and provides a physical environment optimized to promote and accelerate protein folding. The polypeptide is Chaperonin GroEL (Shewanella baltica (strain OS155 / ATCC BAA-1091)).